The following is a 228-amino-acid chain: E3 ubiquitin-protein ligase RNF114 (228 aa).

The RING-type zinc finger occupies 29–68 (CPVCLEVYEKPVQVPCGHVFCSACLQECLKPKKPVCGVCR). Zn(2+) contacts are provided by Cys91 and Cys94. Residues 91–110 (CHGCRKKFFLSKIRSHVATC) form a C2HC RNF-type zinc finger. Lys102 carries the N6-acetyllysine modification. His106 and Cys110 together coordinate Zn(2+). An N6-acetyllysine modification is found at Lys112.

As to quaternary structure, interacts with XAF1, the interaction increases XAF1 stability and proapoptotic effects, and may regulate IFN signaling. Autoubiquitinated. Polyubiquitinated in the presence of E2 enzymes UBE2D1, UBE2D2 and UBE2D3, but only monoubiquitinated in the presence of UBE2E1.

The protein resides in the cytoplasm. Its subcellular location is the nucleus. It carries out the reaction S-ubiquitinyl-[E2 ubiquitin-conjugating enzyme]-L-cysteine + [acceptor protein]-L-lysine = [E2 ubiquitin-conjugating enzyme]-L-cysteine + N(6)-ubiquitinyl-[acceptor protein]-L-lysine.. It participates in protein modification; protein ubiquitination. Functionally, E3 ubiquitin-protein ligase that promotes the ubiquitination of various substrates. In turn, participates in the regulation of many biological processes including cell cycle, apoptosis, osteoclastogenesis as well as innate or adaptive immunity. Acts as negative regulator of NF-kappa-B-dependent transcription by promoting the ubiquitination and stabilization of the NF-kappa-B inhibitor TNFAIP3. May promote the ubiquitination of TRAF6 as well. Also acts as a negative regulator of T-cell activation. Inhibits cellular dsRNA responses and interferon production by targeting MAVS component for proteasomal degradation. Ubiquitinates the CDK inhibitor CDKN1A leading to its degradationand probably also CDKN1B and CDKN1C. This activity stimulates cell cycle G1-to-S phase transition and suppresses cellular senescence. May play a role in spermatogenesis. The sequence is that of E3 ubiquitin-protein ligase RNF114 (RNF114) from Pan troglodytes (Chimpanzee).